Reading from the N-terminus, the 445-residue chain is Adenine permease AdeP (445 aa).

Over Met-1–Ala-28 the chain is Cytoplasmic. Residues Arg-29–Ile-52 form a helical membrane-spanning segment. Topologically, residues Leu-53–Ala-62 are periplasmic. The chain crosses the membrane as a helical span at residues Val-63–Phe-81. At Ala-82–Asn-83 the chain is on the cytoplasmic side. The chain crosses the membrane as a discontinuously helical span at residues Leu-84–Phe-100. Over Val-101–Val-112 the chain is Periplasmic. A helical membrane pass occupies residues Gly-113 to Val-132. The Cytoplasmic portion of the chain corresponds to Arg-133 to Leu-144. Residues Arg-145–Gly-165 traverse the membrane as a helical segment. Residues Val-166–Thr-181 lie on the Periplasmic side of the membrane. A helical membrane pass occupies residues Ser-182–Ala-199. At Ser-200–Ile-203 the chain is on the cytoplasmic side. A helical membrane pass occupies residues His-204–Gly-222. Residues Asp-223–Asn-250 are Periplasmic-facing. Residues Leu-251–Ala-279 form a helical membrane-spanning segment. Over Gly-280 to Lys-292 the chain is Cytoplasmic. Residues Gln-293–Ile-308 form a helical membrane-spanning segment. The Periplasmic portion of the chain corresponds to Gly-309–Thr-310. A discontinuously helical transmembrane segment spans residues Ser-311–Gly-326. Over Gly-327 to Gly-330 the chain is Cytoplasmic. Residues Leu-331–Phe-345 traverse the membrane as a helical segment. The Periplasmic portion of the chain corresponds to Leu-346 to Tyr-356. Residues Ala-357–Val-376 form a helical membrane-spanning segment. Residues Asn-377–Leu-381 are Cytoplasmic-facing. The segment at residues Thr-382–Gly-417 is an intramembrane region (discontinuously helical). At Thr-418–His-445 the chain is on the cytoplasmic side.

The protein belongs to the nucleobase:cation symporter-2 (NCS2) (TC 2.A.40) family. Azg-like subfamily.

The protein localises to the cell inner membrane. Its activity is regulated as follows. Internal adenine may inhibit transport. In terms of biological role, high-affinity transporter for adenine. In Escherichia coli (strain K12), this protein is Adenine permease AdeP (adeP).